A 295-amino-acid chain; its full sequence is Tyrosine recombinase XerC (295 aa).

In terms of domain architecture, Core-binding (CB) spans 1 to 84 (MTLEEQFLSY…SLKSFYRLLT (84 aa)). The 185-residue stretch at 105–289 (KLPEFFYQDE…SMQHLTAEYR (185 aa)) folds into the Tyr recombinase domain. Catalysis depends on residues R145, K169, H241, R244, and H267. The active-site O-(3'-phospho-DNA)-tyrosine intermediate is Y276.

This sequence belongs to the 'phage' integrase family. XerC subfamily. Forms a cyclic heterotetrameric complex composed of two molecules of XerC and two molecules of XerD.

The protein localises to the cytoplasm. In terms of biological role, site-specific tyrosine recombinase, which acts by catalyzing the cutting and rejoining of the recombining DNA molecules. The XerC-XerD complex is essential to convert dimers of the bacterial chromosome into monomers to permit their segregation at cell division. It also contributes to the segregational stability of plasmids. This Lactobacillus leichmannii protein is Tyrosine recombinase XerC.